The following is a 421-amino-acid chain: Testin (421 aa).

The PET domain occupies 92 to 199 (MILTNPVAAK…GDVKLPCEMD (108 aa)). The tract at residues 133–164 (EKQPVAGSEGAQYRKKQLAKQLPAHDQDPSKC) is disordered. A compositionally biased stretch (basic and acidic residues) spans 155 to 164 (PAHDQDPSKC). LIM zinc-binding domains lie at 234–297 (YSCY…CDSE), 299–359 (PRCA…NHAV), and 362–421 (QGCH…KMMS).

The protein belongs to the prickle / espinas / testin family. In terms of assembly, interacts via LIM domain 1 with ZYX. Interacts (via LIM domain 3) with ENAH and VASP. Interacts with ALKBH4, talin, actin, alpha-actinin, GRIP1 and PXN. Interacts (via LIM domain 2) with ACTL7A (via N-terminus). Heterodimer with ACTL7A; the heterodimer interacts with ENAH to form a heterotrimer.

Its subcellular location is the cytoplasm. It is found in the cell junction. It localises to the focal adhesion. Functionally, scaffold protein that may play a role in cell adhesion, cell spreading and in the reorganization of the actin cytoskeleton. Plays a role in the regulation of cell proliferation. May act as a tumor suppressor. This Ateles geoffroyi (Black-handed spider monkey) protein is Testin (TES).